Consider the following 362-residue polypeptide: Photosystem II protein D1 3 (362 aa).

3 helical membrane passes run 29 to 46 (YVGW…SATI), 118 to 133 (HFLI…EWEL), and 142 to 156 (WICI…AATA). H118 serves as a coordination point for chlorophyll a. Y126 lines the pheophytin a pocket. The [CaMn4O5] cluster site is built by D170 and E189. The chain crosses the membrane as a helical span at residues 197 to 218 (FHMLGVAGVFGGALISAMHGSL). Chlorophyll a is bound at residue H198. Residues H215 and 264-265 (AF) each bind a quinone. H215 serves as a coordination point for Fe cation. H274 is a binding site for Fe cation. The helical transmembrane segment at 276 to 290 (IMAAFPVIGIWFTSL) threads the bilayer. 4 residues coordinate [CaMn4O5] cluster: H334, E335, D344, and A346. Positions 347-362 (GTESAPVAVSTAKVGG) are excised as a propeptide.

The protein belongs to the reaction center PufL/M/PsbA/D family. PSII is composed of 1 copy each of membrane proteins PsbA, PsbB, PsbC, PsbD, PsbE, PsbF, PsbH, PsbI, PsbJ, PsbK, PsbL, PsbM, PsbT, PsbX, Psb30/Ycf12, peripheral proteins PsbO, CyanoQ (PsbQ), PsbU, PsbV and a large number of cofactors. It forms dimeric complexes. It depends on The D1/D2 heterodimer binds P680, chlorophylls that are the primary electron donor of PSII, and subsequent electron acceptors. It shares a non-heme iron and each subunit binds pheophytin, quinone, additional chlorophylls, carotenoids and lipids. D1 provides most of the ligands for the Mn4-Ca-O5 cluster of the oxygen-evolving complex (OEC). There is also a Cl(-1) ion associated with D1 and D2, which is required for oxygen evolution. The PSII complex binds additional chlorophylls, carotenoids and specific lipids. as a cofactor. Post-translationally, tyr-161 forms a radical intermediate that is referred to as redox-active TyrZ, YZ or Y-Z. In terms of processing, C-terminally processed by CtpA; processing is essential to allow assembly of the oxygen-evolving complex and thus photosynthetic growth.

The protein resides in the cell inner membrane. It catalyses the reaction 2 a plastoquinone + 4 hnu + 2 H2O = 2 a plastoquinol + O2. In terms of biological role, photosystem II (PSII) is a light-driven water:plastoquinone oxidoreductase that uses light energy to abstract electrons from H(2)O, generating O(2) and a proton gradient subsequently used for ATP formation. It consists of a core antenna complex that captures photons, and an electron transfer chain that converts photonic excitation into a charge separation. The D1/D2 (PsbA/PsbD) reaction center heterodimer binds P680, the primary electron donor of PSII as well as several subsequent electron acceptors. This chain is Photosystem II protein D1 3, found in Gloeobacter violaceus (strain ATCC 29082 / PCC 7421).